Reading from the N-terminus, the 961-residue chain is Leucine--tRNA ligase (961 aa).

The short motif at 41–51 is the 'HIGH' region element; the sequence is PYLNGNLHAGH. A 'KMSKS' region motif is present at residues 632-636; that stretch reads KMSKS. Residue K635 coordinates ATP.

Belongs to the class-I aminoacyl-tRNA synthetase family.

Its subcellular location is the cytoplasm. The enzyme catalyses tRNA(Leu) + L-leucine + ATP = L-leucyl-tRNA(Leu) + AMP + diphosphate. The sequence is that of Leucine--tRNA ligase from Methanosarcina acetivorans (strain ATCC 35395 / DSM 2834 / JCM 12185 / C2A).